A 322-amino-acid chain; its full sequence is MTNQTVSPLFPHRHLLGIKGLSPLDILCLLDLAYQEIAVSRQPEKKKSVLRGRTQINLFFEASTRTQSSFELAGKRLGADVMNMSVGNSSVKKGETLIDTAMTLNAMQPDILVIRHASAGAAALLAQKVGCSVVNAGDGAHEHPTQALLDALTIRRAKGQIENLIVAICGDVLHSRVARSNILLLNALGARVRVVAPSTLLPAGMADMSVEVFNSMEEGLKDADVVMMLRLQRERMAGSFVPSVREYFHFYGLDREKLKFAKPDALVMHPGPMNRGVEIASDVADGPQSVIQQQVEMGVAVRMAVMEALLDPRRNPGNGEPA.

Positions 65 and 66 each coordinate carbamoyl phosphate. Residue Lys-93 participates in L-aspartate binding. Residues Arg-115, His-143, and Gln-146 each coordinate carbamoyl phosphate. L-aspartate-binding residues include Arg-176 and Arg-230. Carbamoyl phosphate contacts are provided by Gly-271 and Pro-272.

This sequence belongs to the aspartate/ornithine carbamoyltransferase superfamily. ATCase family. As to quaternary structure, heterododecamer (2C3:3R2) of six catalytic PyrB chains organized as two trimers (C3), and six regulatory PyrI chains organized as three dimers (R2).

It carries out the reaction carbamoyl phosphate + L-aspartate = N-carbamoyl-L-aspartate + phosphate + H(+). The protein operates within pyrimidine metabolism; UMP biosynthesis via de novo pathway; (S)-dihydroorotate from bicarbonate: step 2/3. Catalyzes the condensation of carbamoyl phosphate and aspartate to form carbamoyl aspartate and inorganic phosphate, the committed step in the de novo pyrimidine nucleotide biosynthesis pathway. The protein is Aspartate carbamoyltransferase catalytic subunit of Brucella canis (strain ATCC 23365 / NCTC 10854 / RM-666).